Consider the following 358-residue polypeptide: Sulfate/thiosulfate import ATP-binding protein CysA 1 (358 aa).

One can recognise an ABC transporter domain in the interval 3–237 (IQVENIRKAF…PASAFVYGFL (235 aa)). 35-42 (GPSGCGKT) lines the ATP pocket.

This sequence belongs to the ABC transporter superfamily. Sulfate/tungstate importer (TC 3.A.1.6) family. As to quaternary structure, the complex is composed of two ATP-binding proteins (CysA), two transmembrane proteins (CysT and CysW) and a solute-binding protein (CysP).

The protein localises to the cell inner membrane. It carries out the reaction sulfate(out) + ATP + H2O = sulfate(in) + ADP + phosphate + H(+). The catalysed reaction is thiosulfate(out) + ATP + H2O = thiosulfate(in) + ADP + phosphate + H(+). Its function is as follows. Part of the ABC transporter complex CysAWTP involved in sulfate/thiosulfate import. Responsible for energy coupling to the transport system. The chain is Sulfate/thiosulfate import ATP-binding protein CysA 1 from Chromobacterium violaceum (strain ATCC 12472 / DSM 30191 / JCM 1249 / CCUG 213 / NBRC 12614 / NCIMB 9131 / NCTC 9757 / MK).